An 81-amino-acid chain; its full sequence is Short neurotoxin 2 (81 aa).

Positions 1–21 (MKTLLLTLVVVTIVCLDLGYT) are cleaved as a signal peptide. 4 cysteine pairs are disulfide-bonded: Cys-24-Cys-43, Cys-38-Cys-60, Cys-62-Cys-73, and Cys-74-Cys-79.

This sequence belongs to the three-finger toxin family. Short-chain subfamily. Type I alpha-neurotoxin sub-subfamily. In terms of tissue distribution, expressed by the venom gland.

It localises to the secreted. Its function is as follows. Binds to muscle nicotinic acetylcholine receptor (nAChR) and inhibit acetylcholine from binding to the receptor, thereby impairing neuromuscular transmission. The chain is Short neurotoxin 2 from Cryptophis nigrescens (Eastern small-eyed snake).